Consider the following 327-residue polypeptide: tRNA uridine(34) hydroxylase (327 aa).

A Rhodanese domain is found at 122-218; the sequence is QENRCLVLDV…YGLKMGTGKW (97 aa). The Cysteine persulfide intermediate role is filled by C178.

The protein belongs to the TrhO family.

It catalyses the reaction uridine(34) in tRNA + AH2 + O2 = 5-hydroxyuridine(34) in tRNA + A + H2O. Functionally, catalyzes oxygen-dependent 5-hydroxyuridine (ho5U) modification at position 34 in tRNAs. In Chlamydia trachomatis serovar L2 (strain ATCC VR-902B / DSM 19102 / 434/Bu), this protein is tRNA uridine(34) hydroxylase.